Here is a 316-residue protein sequence, read N- to C-terminus: tRNA pseudouridine synthase B (316 aa).

Aspartate 47 functions as the Nucleophile in the catalytic mechanism.

Belongs to the pseudouridine synthase TruB family. Type 1 subfamily.

It catalyses the reaction uridine(55) in tRNA = pseudouridine(55) in tRNA. Its function is as follows. Responsible for synthesis of pseudouridine from uracil-55 in the psi GC loop of transfer RNAs. This chain is tRNA pseudouridine synthase B, found in Aliivibrio fischeri (strain ATCC 700601 / ES114) (Vibrio fischeri).